The primary structure comprises 286 residues: Penicillin-insensitive murein endopeptidase (286 aa).

The N-terminal stretch at methionine 1 to alanine 22 is a signal peptide. Histidine 117, histidine 120, aspartate 127, aspartate 152, and histidine 218 together coordinate Zn(2+).

Belongs to the peptidase M74 family. The cofactor is Zn(2+).

The protein resides in the periplasm. Murein endopeptidase that cleaves the D-alanyl-meso-2,6-diamino-pimelyl amide bond that connects peptidoglycan strands. Likely plays a role in the removal of murein from the sacculus. In Haemophilus influenzae (strain ATCC 51907 / DSM 11121 / KW20 / Rd), this protein is Penicillin-insensitive murein endopeptidase (mepA).